Reading from the N-terminus, the 120-residue chain is Chaperonin GroEL (120 aa).

23–27 (DGTTT) contributes to the ATP binding site.

This sequence belongs to the chaperonin (HSP60) family. As to quaternary structure, forms a cylinder of 14 subunits composed of two heptameric rings stacked back-to-back. Interacts with the co-chaperonin GroES.

The protein localises to the cytoplasm. The enzyme catalyses ATP + H2O + a folded polypeptide = ADP + phosphate + an unfolded polypeptide.. Its function is as follows. Together with its co-chaperonin GroES, plays an essential role in assisting protein folding. The GroEL-GroES system forms a nano-cage that allows encapsulation of the non-native substrate proteins and provides a physical environment optimized to promote and accelerate protein folding. The chain is Chaperonin GroEL from Mycolicibacterium rhodesiae (Mycobacterium rhodesiae).